Here is a 466-residue protein sequence, read N- to C-terminus: MLGTVKMEGHESNDWNSYYADTQEAYSSVPVSNMNSGLGSMNSMNTYMTMNTMTTSGNMTPASFNMSYANPGLGAGLSPGAVAGMPGGSAGAMNSMTAAGVTAMGAALSPGGMGSMGAQPAASMNGLGPYAAAMNPCMSPMAYAPSNLGRSRAGGGGDAKTFKRSYPHAKPPYSYISLITMAIQQAPSKMLTLSEIYQWIMDLFPYYRQNQQRWQNSIRHSLSFNACFVKVARSPDKPGKGSYWTLHPDSGNMFENGCYLRRQKRFKCEKQPGAGGGSGGGGSKGVPENRKDPSGPVNPSAESPIHRGVHGKASQLEGAPAPGPAASPQTLDHSGATATGGGSELKSPASSSAPPISSGPGGWICTPLSPTWLAPHESQLHLKGAPHYSFNHPFSINNLMSSSEQQHKLDFKAYEQALQYSPYGATLPASLPLGGASVATRSPIEPSALEPAYYQGVYSRPVLNTS.

A DNA-binding region (fork-head) is located at residues Ala169 to Leu260. An essential for DNA binding region spans residues Gly251–Glu288. The segment at Glu269–Ser358 is disordered. Gly residues predominate over residues Gly273 to Lys284. A phosphoserine mark is found at Ser303 and Ser327. 2 stretches are compositionally biased toward low complexity: residues Gly318–Pro328 and Glu344–Ser358.

As to quaternary structure, binds DNA as a monomer. Interacts with FOXA2. Interacts with NKX2-1. Interacts with HDAC7. Interacts with the histone H3-H4 heterodimer. Associates with nucleosomes containing histone H2A. Interacts with AR. Interacts with NR0B2. In terms of tissue distribution, liver.

It localises to the nucleus. Transcription factor that is involved in embryonic development, establishment of tissue-specific gene expression and regulation of gene expression in differentiated tissues. Is thought to act as a 'pioneer' factor opening the compacted chromatin for other proteins through interactions with nucleosomal core histones and thereby replacing linker histones at target enhancer and/or promoter sites. Binds DNA with the consensus sequence 5'-[AC]A[AT]T[AG]TT[GT][AG][CT]T[CT]-3'. Proposed to play a role in translating the epigenetic signatures into cell type-specific enhancer-driven transcriptional programs. Involved in glucose homeostasis; activates the GCG promoter. Involved in the development of multiple endoderm-derived organ systems such as the liver, pancreas, lungs and prostate; FOXA1 and FOXA2 seem to have at least in part redundant roles. Modulates the transcriptional activity of nuclear hormone receptors. Is required for maximal gene activation mediated by AR in the prostate. Negatively regulates AR transactivation via competition with coactivators such as NCOA2. Is involved in ESR1-mediated transcription. Involved in regulation of apoptosis. Involved in cell cycle regulation. Originally described as a transcription activator for a number of liver genes such as AFP, albumin, tyrosine aminotransferase, PEPCK, etc. Interacts with the cis-acting regulatory regions of these genes. The polypeptide is Hepatocyte nuclear factor 3-alpha (Foxa1) (Rattus norvegicus (Rat)).